An 860-amino-acid chain; its full sequence is Leucine--tRNA ligase (860 aa).

The 'HIGH' region motif lies at 42–52 (PYPSGRLHMGH). The 'KMSKS' region signature appears at 619–623 (KMSKS). Residue Lys-622 coordinates ATP.

Belongs to the class-I aminoacyl-tRNA synthetase family.

It localises to the cytoplasm. The catalysed reaction is tRNA(Leu) + L-leucine + ATP = L-leucyl-tRNA(Leu) + AMP + diphosphate. In Pectobacterium atrosepticum (strain SCRI 1043 / ATCC BAA-672) (Erwinia carotovora subsp. atroseptica), this protein is Leucine--tRNA ligase.